The following is an 878-amino-acid chain: Phosphoenolpyruvate carboxylase (878 aa).

Catalysis depends on residues His-137 and Lys-545.

It belongs to the PEPCase type 1 family. Mg(2+) serves as cofactor.

The enzyme catalyses oxaloacetate + phosphate = phosphoenolpyruvate + hydrogencarbonate. Its function is as follows. Forms oxaloacetate, a four-carbon dicarboxylic acid source for the tricarboxylic acid cycle. This is Phosphoenolpyruvate carboxylase from Photorhabdus laumondii subsp. laumondii (strain DSM 15139 / CIP 105565 / TT01) (Photorhabdus luminescens subsp. laumondii).